The sequence spans 181 residues: Mediator of RNA polymerase II transcription subunit 19 (181 aa).

The interval 120-181 (GMPGPGKPGI…TDGERRRKRK (62 aa)) is disordered. The span at 122–133 (PGPGKPGIGPQV) shows a compositional bias: gly residues. Residues 143–158 (RSYNTESARESSNNEE) show a composition bias toward polar residues.

It belongs to the Mediator complex subunit 19 family. As to quaternary structure, component of the Mediator complex.

Its subcellular location is the nucleus. In terms of biological role, component of the Mediator complex, a coactivator involved in the regulated transcription of nearly all RNA polymerase II-dependent genes. Mediator functions as a bridge to convey information from gene-specific regulatory proteins to the basal RNA polymerase II transcription machinery. Mediator is recruited to promoters by direct interactions with regulatory proteins and serves as a scaffold for the assembly of a functional preinitiation complex with RNA polymerase II and the general transcription factors. This is Mediator of RNA polymerase II transcription subunit 19 (ROX3) from Yarrowia lipolytica (strain CLIB 122 / E 150) (Yeast).